The primary structure comprises 349 residues: Anthranilate phosphoribosyltransferase (349 aa).

5-phospho-alpha-D-ribose 1-diphosphate contacts are provided by residues Gly81, 84–85 (GD), Thr89, 91–94 (NVST), 109–117 (KHGNRAASS), and Ala121. Gly81 is an anthranilate binding site. Ser93 is a binding site for Mg(2+). Asn112 contacts anthranilate. Arg167 contributes to the anthranilate binding site. Mg(2+) contacts are provided by Asp226 and Glu227.

The protein belongs to the anthranilate phosphoribosyltransferase family. As to quaternary structure, homodimer. The cofactor is Mg(2+).

It carries out the reaction N-(5-phospho-beta-D-ribosyl)anthranilate + diphosphate = 5-phospho-alpha-D-ribose 1-diphosphate + anthranilate. Its pathway is amino-acid biosynthesis; L-tryptophan biosynthesis; L-tryptophan from chorismate: step 2/5. Its function is as follows. Catalyzes the transfer of the phosphoribosyl group of 5-phosphorylribose-1-pyrophosphate (PRPP) to anthranilate to yield N-(5'-phosphoribosyl)-anthranilate (PRA). This Methylocella silvestris (strain DSM 15510 / CIP 108128 / LMG 27833 / NCIMB 13906 / BL2) protein is Anthranilate phosphoribosyltransferase.